The primary structure comprises 110 residues: Large ribosomal subunit protein P1B (110 aa).

The segment covering 69-85 (PAAGGAGAPAAAAGGEA) has biased composition (low complexity). Positions 69–110 (PAAGGAGAPAAAAGGEAAAEEQKEEAKEEEESDEDMGFGLFD) are disordered. The segment covering 95 to 104 (KEEEESDEDM) has biased composition (acidic residues).

This sequence belongs to the eukaryotic ribosomal protein P1/P2 family. Component of the large ribosomal subunit (LSU). Mature yeast ribosomes consist of a small (40S) and a large (60S) subunit. The 40S small subunit contains 1 molecule of ribosomal RNA (18S rRNA) and at least 33 different proteins. The large 60S subunit contains 3 rRNA molecules (25S, 5.8S and 5S rRNA) and at least 46 different proteins. The acidic ribosomal P-proteins form the stalk structure of the 60S subunit. They are organized as a pentameric complex in which uL10/P0 interacts with 2 heterodimers of P1 and P2 proteins.

Its subcellular location is the cytoplasm. Component of the ribosome, a large ribonucleoprotein complex responsible for the synthesis of proteins in the cell. The small ribosomal subunit (SSU) binds messenger RNAs (mRNAs) and translates the encoded message by selecting cognate aminoacyl-transfer RNA (tRNA) molecules. The large subunit (LSU) contains the ribosomal catalytic site termed the peptidyl transferase center (PTC), which catalyzes the formation of peptide bonds, thereby polymerizing the amino acids delivered by tRNAs into a polypeptide chain. The nascent polypeptides leave the ribosome through a tunnel in the LSU and interact with protein factors that function in enzymatic processing, targeting, and the membrane insertion of nascent chains at the exit of the ribosomal tunnel. This is Large ribosomal subunit protein P1B (rpp102) from Schizosaccharomyces pombe (strain 972 / ATCC 24843) (Fission yeast).